The chain runs to 163 residues: Crossover junction endodeoxyribonuclease RuvC (163 aa).

Active-site residues include Asp4, Glu65, and Asp138. Mg(2+) contacts are provided by Asp4, Glu65, and Asp138.

This sequence belongs to the RuvC family. Homodimer which binds Holliday junction (HJ) DNA. The HJ becomes 2-fold symmetrical on binding to RuvC with unstacked arms; it has a different conformation from HJ DNA in complex with RuvA. In the full resolvosome a probable DNA-RuvA(4)-RuvB(12)-RuvC(2) complex forms which resolves the HJ. It depends on Mg(2+) as a cofactor.

It localises to the cytoplasm. It catalyses the reaction Endonucleolytic cleavage at a junction such as a reciprocal single-stranded crossover between two homologous DNA duplexes (Holliday junction).. Functionally, the RuvA-RuvB-RuvC complex processes Holliday junction (HJ) DNA during genetic recombination and DNA repair. Endonuclease that resolves HJ intermediates. Cleaves cruciform DNA by making single-stranded nicks across the HJ at symmetrical positions within the homologous arms, yielding a 5'-phosphate and a 3'-hydroxyl group; requires a central core of homology in the junction. The consensus cleavage sequence is 5'-(A/T)TT(C/G)-3'. Cleavage occurs on the 3'-side of the TT dinucleotide at the point of strand exchange. HJ branch migration catalyzed by RuvA-RuvB allows RuvC to scan DNA until it finds its consensus sequence, where it cleaves and resolves the cruciform DNA. The chain is Crossover junction endodeoxyribonuclease RuvC from Corynebacterium jeikeium (strain K411).